We begin with the raw amino-acid sequence, 295 residues long: NAD kinase (295 aa).

Catalysis depends on aspartate 73, which acts as the Proton acceptor. Residues 73-74, arginine 78, 146-147, lysine 157, arginine 174, aspartate 176, and 187-192 each bind NAD(+); these read DG, NE, and TAYSLS.

The protein belongs to the NAD kinase family. A divalent metal cation is required as a cofactor.

The protein resides in the cytoplasm. It catalyses the reaction NAD(+) + ATP = ADP + NADP(+) + H(+). Involved in the regulation of the intracellular balance of NAD and NADP, and is a key enzyme in the biosynthesis of NADP. Catalyzes specifically the phosphorylation on 2'-hydroxyl of the adenosine moiety of NAD to yield NADP. This Wigglesworthia glossinidia brevipalpis protein is NAD kinase.